A 146-amino-acid polypeptide reads, in one-letter code: D-aminoacyl-tRNA deacylase (146 aa).

The Gly-cisPro motif, important for rejection of L-amino acids signature appears at 137–138 (GP).

Belongs to the DTD family. In terms of assembly, homodimer.

The protein localises to the cytoplasm. The enzyme catalyses glycyl-tRNA(Ala) + H2O = tRNA(Ala) + glycine + H(+). It carries out the reaction a D-aminoacyl-tRNA + H2O = a tRNA + a D-alpha-amino acid + H(+). An aminoacyl-tRNA editing enzyme that deacylates mischarged D-aminoacyl-tRNAs. Also deacylates mischarged glycyl-tRNA(Ala), protecting cells against glycine mischarging by AlaRS. Acts via tRNA-based rather than protein-based catalysis; rejects L-amino acids rather than detecting D-amino acids in the active site. By recycling D-aminoacyl-tRNA to D-amino acids and free tRNA molecules, this enzyme counteracts the toxicity associated with the formation of D-aminoacyl-tRNA entities in vivo and helps enforce protein L-homochirality. This chain is D-aminoacyl-tRNA deacylase, found in Hahella chejuensis (strain KCTC 2396).